The primary structure comprises 200 residues: Glycerol-3-phosphate acyltransferase (200 aa).

Helical transmembrane passes span 4 to 24, 70 to 90, 110 to 130, and 158 to 178; these read ALLAVLGGYLLGSIPTGYWVG, ALGSALGSAWWVVLAALFAVI, LGILLAMAWPVALTTFGVWLL, and QPLPYLLFALAGGVYVIGAHR.

Belongs to the PlsY family. Probably interacts with PlsX.

The protein resides in the cell inner membrane. It carries out the reaction an acyl phosphate + sn-glycerol 3-phosphate = a 1-acyl-sn-glycero-3-phosphate + phosphate. It participates in lipid metabolism; phospholipid metabolism. Catalyzes the transfer of an acyl group from acyl-phosphate (acyl-PO(4)) to glycerol-3-phosphate (G3P) to form lysophosphatidic acid (LPA). This enzyme utilizes acyl-phosphate as fatty acyl donor, but not acyl-CoA or acyl-ACP. The polypeptide is Glycerol-3-phosphate acyltransferase (Synechococcus sp. (strain JA-2-3B'a(2-13)) (Cyanobacteria bacterium Yellowstone B-Prime)).